The primary structure comprises 105 residues: Nucleoid-associated protein MXAN_1931 (105 aa).

Belongs to the YbaB/EbfC family. In terms of assembly, homodimer.

It localises to the cytoplasm. Its subcellular location is the nucleoid. Binds to DNA and alters its conformation. May be involved in regulation of gene expression, nucleoid organization and DNA protection. The sequence is that of Nucleoid-associated protein MXAN_1931 from Myxococcus xanthus (strain DK1622).